Consider the following 200-residue polypeptide: FMN-dependent NADH:quinone oxidoreductase 2 (200 aa).

135–138 (SRGG) serves as a coordination point for FMN.

It belongs to the azoreductase type 1 family. Homodimer. FMN serves as cofactor.

It carries out the reaction 2 a quinone + NADH + H(+) = 2 a 1,4-benzosemiquinone + NAD(+). It catalyses the reaction N,N-dimethyl-1,4-phenylenediamine + anthranilate + 2 NAD(+) = 2-(4-dimethylaminophenyl)diazenylbenzoate + 2 NADH + 2 H(+). In terms of biological role, quinone reductase that provides resistance to thiol-specific stress caused by electrophilic quinones. Functionally, also exhibits azoreductase activity. Catalyzes the reductive cleavage of the azo bond in aromatic azo compounds to the corresponding amines. This chain is FMN-dependent NADH:quinone oxidoreductase 2, found in Clostridium acetobutylicum (strain ATCC 824 / DSM 792 / JCM 1419 / IAM 19013 / LMG 5710 / NBRC 13948 / NRRL B-527 / VKM B-1787 / 2291 / W).